Here is a 176-residue protein sequence, read N- to C-terminus: Interleukin-19 (176 aa).

The first 24 residues, 1–24 (MKTQCASTWLLGMTLILCSVHIYS), serve as a signal peptide directing secretion. Cystine bridges form between Cys-28–Cys-120, Cys-74–Cys-126, and Cys-75–Cys-128. The N-linked (GlcNAc...) asparagine glycan is linked to Asn-56. Residues Asn-127 and Asn-134 are each glycosylated (N-linked (GlcNAc...) asparagine).

It belongs to the IL-10 family.

It is found in the secreted. In terms of biological role, cytokine that functions as an anti-inflammatory and proangiogenic factor. Polarizes adaptive immunity to an anti-inflammatory phenotype through induction of T-helper 2 responses by both down-regulation of IFN-gamma and up-regulation of IL4 and IL5. Produced by osteocytes, stimulates granulopoiesis and neutrophil formation. Exerts its biological effect through a receptor complex consisting of a heterodimer of IL20RA and IL20RB. In turn, activates the Janus kinase (JAK) and signal transducer and activator of transcription (STAT) pathway, and importantly, STAT3. This Mus musculus (Mouse) protein is Interleukin-19 (Il19).